The following is a 354-amino-acid chain: Pyrimidine monooxygenase RutA (354 aa).

FMN contacts are provided by residues 49 to 50, Asn115, Glu124, 140 to 141, and Ser189; these read IK and RY.

Belongs to the NtaA/SnaA/DszA monooxygenase family. RutA subfamily.

It carries out the reaction uracil + FMNH2 + NADH + O2 = (Z)-3-ureidoacrylate + FMN + NAD(+) + H2O + H(+). The enzyme catalyses thymine + FMNH2 + NADH + O2 = (Z)-2-methylureidoacrylate + FMN + NAD(+) + H2O + H(+). Its function is as follows. Catalyzes the pyrimidine ring opening between N-3 and C-4 by an unusual flavin hydroperoxide-catalyzed mechanism, adding oxygen atoms in the process to yield ureidoacrylate peracid, that immediately reacts with FMN forming ureidoacrylate and FMN-N(5)-oxide. The FMN-N(5)-oxide reacts spontaneously with NADH to produce FMN. Requires the flavin reductase RutF to regenerate FMN in vivo. This Caulobacter sp. (strain K31) protein is Pyrimidine monooxygenase RutA.